A 132-amino-acid polypeptide reads, in one-letter code: Small ribosomal subunit protein uS8 (132 aa).

This sequence belongs to the universal ribosomal protein uS8 family. In terms of assembly, part of the 30S ribosomal subunit. Contacts proteins S5 and S12.

One of the primary rRNA binding proteins, it binds directly to 16S rRNA central domain where it helps coordinate assembly of the platform of the 30S subunit. The protein is Small ribosomal subunit protein uS8 of Rhodopseudomonas palustris (strain BisA53).